The sequence spans 342 residues: Ribosomal RNA small subunit methyltransferase C (342 aa).

The protein belongs to the methyltransferase superfamily. RsmC family. As to quaternary structure, monomer.

It is found in the cytoplasm. It catalyses the reaction guanosine(1207) in 16S rRNA + S-adenosyl-L-methionine = N(2)-methylguanosine(1207) in 16S rRNA + S-adenosyl-L-homocysteine + H(+). In terms of biological role, specifically methylates the guanine in position 1207 of 16S rRNA in the 30S particle. The sequence is that of Ribosomal RNA small subunit methyltransferase C from Salmonella gallinarum (strain 287/91 / NCTC 13346).